The sequence spans 879 residues: Alanine--tRNA ligase (879 aa).

Zn(2+)-binding residues include H566, H570, C668, and H672.

It belongs to the class-II aminoacyl-tRNA synthetase family. Requires Zn(2+) as cofactor.

It localises to the cytoplasm. It carries out the reaction tRNA(Ala) + L-alanine + ATP = L-alanyl-tRNA(Ala) + AMP + diphosphate. In terms of biological role, catalyzes the attachment of alanine to tRNA(Ala) in a two-step reaction: alanine is first activated by ATP to form Ala-AMP and then transferred to the acceptor end of tRNA(Ala). Also edits incorrectly charged Ser-tRNA(Ala) and Gly-tRNA(Ala) via its editing domain. This Clostridium perfringens (strain 13 / Type A) protein is Alanine--tRNA ligase.